We begin with the raw amino-acid sequence, 635 residues long: Threonine--tRNA ligase (635 aa).

Positions 1–61 (MIKITLKDGK…HKDSSLEILT (61 aa)) constitute a TGS domain. The segment at 242 to 532 (DHRKLGKELD…LIEQYAGAFP (291 aa)) is catalytic. Residues cysteine 333, histidine 384, and histidine 509 each coordinate Zn(2+).

The protein belongs to the class-II aminoacyl-tRNA synthetase family. In terms of assembly, homodimer. The cofactor is Zn(2+).

It is found in the cytoplasm. The enzyme catalyses tRNA(Thr) + L-threonine + ATP = L-threonyl-tRNA(Thr) + AMP + diphosphate + H(+). Functionally, catalyzes the attachment of threonine to tRNA(Thr) in a two-step reaction: L-threonine is first activated by ATP to form Thr-AMP and then transferred to the acceptor end of tRNA(Thr). Also edits incorrectly charged L-seryl-tRNA(Thr). This chain is Threonine--tRNA ligase, found in Clostridium botulinum (strain ATCC 19397 / Type A).